Reading from the N-terminus, the 505-residue chain is MEPQPGGARSCRRGAPGGACELSTTAESAAPMSLAIHSTTGTRYDLSVPHDETVEGLRKRLSQRLKVPKERLALLHKDTRLSSGKLQEFGVGDGSKLTLVPTVEAGLMSQASRPEQSVMQALESLTETQPPATPGPGRAAGGGFRKYRLILFKRPWHRQGPQSPERGGERPQVSDFLSGRSPLTLALRVGDHMMFVQLQLAAQHAPLQHRHVLAAAAAAAAAARGDSSIATPVSSPCRPVSSAARVPPVSSSPSSPVSPSPVTAGTFQSHAASTTCPEQTDCSPPASSNTTSTPGSSPTPRSRKPGAVIESFVNHAPGVFSGTFSGTLHPNCQDSSGRPRRDIGTILQILNDLLSATRHYQGMPASLTQLRCHAQCSPASPAPDLTPKTTSCEKLATPSLLQGQSQIRMCKPPGDRLRQTENRATRCKVERLQLLLQQKRLRRKARRDARGPYHWTPSRKAGRSDSSSSGGGGSPSEATGLGLDFEDSVWKPEVNPDIQSEFVVA.

The region spanning 32–106 is the Ubiquitin-like domain; the sequence is MSLAIHSTTG…LTLVPTVEAG (75 aa). Disordered regions lie at residues 155-176, 228-305, and 440-485; these read PWHR…VSDF, SIAT…SRKP, and RLRR…GLDF. Positions 238-262 are enriched in low complexity; that stretch reads RPVSSAARVPPVSSSPSSPVSPSPV. Positions 263–282 are enriched in polar residues; sequence TAGTFQSHAASTTCPEQTDC. A compositionally biased stretch (low complexity) spans 283–300; that stretch reads SPPASSNTTSTPGSSPTP.

Interacts with GCK; the interaction occurs preferentially at low glucose levels. Interacts with the proteasome.

It localises to the nucleus. Its subcellular location is the cytoplasm. It is found in the cytosol. The protein resides in the nucleolus. Its function is as follows. Facilitates the ubiquitin-independent proteasomal degradation of stimulus-induced transcription factors such as FOSB, EGR1, NR4A1, and IRF4 to the proteasome for degradation. Promotes also the degradation of other substrates such as CBX4. Plays a role in inhibiting the activity of glucokinase GCK and both glucose-induced and basal insulin secretion. This chain is Midnolin, found in Rattus norvegicus (Rat).